A 282-amino-acid polypeptide reads, in one-letter code: Adenosylcobinamide-GDP ribazoletransferase (282 aa).

6 consecutive transmembrane segments (helical) span residues 47–67, 72–92, 124–144, 167–187, 208–228, and 231–251; these read GVGILVGVMAALVYGLIQALL, FTPLVAAVLSTAATVLLTGGF, AFGAMALMLALLGKTALLAML, AALLTGHVVSRGLPLLLIWLL, GSLLVAFIWSFVVLALAGLAL, and ISLIVACSFSLLALLWMGALF.

This sequence belongs to the CobS family. It depends on Mg(2+) as a cofactor.

The protein resides in the cell inner membrane. The enzyme catalyses alpha-ribazole + adenosylcob(III)inamide-GDP = adenosylcob(III)alamin + GMP + H(+). The catalysed reaction is alpha-ribazole 5'-phosphate + adenosylcob(III)inamide-GDP = adenosylcob(III)alamin 5'-phosphate + GMP + H(+). Its pathway is cofactor biosynthesis; adenosylcobalamin biosynthesis; adenosylcobalamin from cob(II)yrinate a,c-diamide: step 7/7. In terms of biological role, joins adenosylcobinamide-GDP and alpha-ribazole to generate adenosylcobalamin (Ado-cobalamin). Also synthesizes adenosylcobalamin 5'-phosphate from adenosylcobinamide-GDP and alpha-ribazole 5'-phosphate. The sequence is that of Adenosylcobinamide-GDP ribazoletransferase from Polaromonas sp. (strain JS666 / ATCC BAA-500).